Reading from the N-terminus, the 962-residue chain is Protocadherin gamma-A4 (962 aa).

The tract at residues 1-24 (MHFILDPEDPGAPQASTEGKPKHR) is disordered. Residues 1-59 (MHFILDPEDPGAPQASTEGKPKHRRLRGGVVMAAPPARPDHTRLLQICLLLGVLVEIRA) form the signal peptide. 6 consecutive Cadherin domains span residues 60–164 (EQIL…PPSF), 165–273 (GTEQ…APVF), 274–378 (TQPE…APEV), 379–483 (TVTS…PPTF), 484–598 (PHAS…YPTF), and 601–713 (DGST…KPSA). The Extracellular portion of the chain corresponds to 60-723 (EQILYSVFEE…DPDDSGLTLY (664 aa)). N-linked (GlcNAc...) asparagine glycans are attached at residues Asn-450 and Asn-576. A helical membrane pass occupies residues 724–744 (LVVAVAAVSCVFLAFVTVLLA). Residues 745–962 (LKLRRWHKSR…KKKSGKKEKK (218 aa)) lie on the Cytoplasmic side of the membrane. Disordered stretches follow at residues 832–871 (KGDP…WPNN) and 932–962 (ATLT…KEKK). Polar residues predominate over residues 836-871 (NLQQAPPNTDWRFSQAQRPGTSGSQNGDDTGTWPNN). Basic residues predominate over residues 952 to 962 (NKKKSGKKEKK).

It is found in the cell membrane. Its function is as follows. Potential calcium-dependent cell-adhesion protein. May be involved in the establishment and maintenance of specific neuronal connections in the brain. The chain is Protocadherin gamma-A4 (PCDHGA4) from Homo sapiens (Human).